The chain runs to 1223 residues: MLPYTVNFKVSARTLTGALNAHNKAAVDWGWQGLIAYGCHSLVVVIDSNTAQTLQVLEKHKADIVKVRWARENYHHNIGSPYCLRLASADVTGKIIVWDVAAGVAQCEIQEHVKPIQDVQWLWNQDASRDLLLAIHPPNYIVLWNADTGTKLWKKSYADNILSFSFDPFDPSHLTLLTSEGIVFISDFSPSKPPSGPGKKVYISSPHSSPAHNKLAAATGAKKALNKVKILITQEKPSADFVALNDCLQLAYLPSKRNHMLLLYPREILILDLEVNQTVGVIAIERTGVPFLQVIPCSQRDGLFCLHENGCITLRVRRSYNSICTTSNDEPDLDPVQELTYDLRSQCDAIRVTKTVRPFSMVCCPVNENAAALIVSDGRVMIWELKSAVCSRNARNSSGVSPLYSPVSFCGIPGGVLQNKLPDLSLDNMIGQSAIAGEEHPKGSILQEVHLKFLLTGLLSGLPSPQFAIRMCPPLTTKNIKTYQPLLAVGTSNGSVLVYHLTSGLLHKELSVHSCEVKGIEWTSLTSFLSFAASTPNNMGLVRNELQLVDLPTGRSTAFRGDRGNDESPIEMIKVSHLKQYLAVVFKDKPLELWDIRTCTLLREMSKSFPAITALEWSPSHNLKSLRKKQLATREAMARQTVVSDAELGAVESSVISLLQEAESKAELSQNISAREHFVFTDNDGQVYHLTVEGNSVKDSARIPPDGSMGSITCIAWKGDTLVLGDMDGNLNFWDLKARVSRGIPTHRSWVRKIRFAPGKGNQKLIAMYNDGAEVWDTKEVQMVSSLRSGRNVTFRILDVDWCTSDKVILASDDGCIRVLEMSMKSTCFRMDEQELVEPVWCPYLLVPRAALALKAFLLHQPWNGRYSLDISHIDYPENEEIKTLLQEQLHALSNDIKKLLLDPDFSLLQRCLLVSRLYGDESELHFWTVAAHYLHSLSQAKSGDTVVTKEGAPKDRLSNPLDICYDVLCENTYFQKFQLERVNLQEVKRSTYDHTRKCTDQLLLLGQTDRAVQLLLETSADNQHYYCDSLKACLVTTVTSSGPSQSTIKLVATNMIANGKLAEGVQLLCLIDKAADACRYLQTYGEWNRAAWLAKVRLNSEECADVLKRWVDHLCSPQVNQKSKALLVLLSLGCFVSVAETLHSMRYFDRAALFVEACLKYGAFEVSEDTEKLIAAIYADYARSLKSLGFRQGAVRFASKAGAAGRDLLNELGSTKEELTES.

WD repeat units follow at residues 59–108 and 111–154; these read KHKA…AQCE and EHVK…KLWK. Phosphoserine occurs at positions 205 and 209. One copy of the WD 3 repeat lies at 354 to 393; the sequence is KTVRPFSMVCCPVNENAAALIVSDGRVMIWELKSAVCSRN. Phosphoserine occurs at positions 401 and 405. 6 WD repeats span residues 470 to 509, 565 to 604, 707 to 744, 746 to 786, 792 to 830, and 892 to 939; these read RMCPPLTTKNIKTYQPLLAVGTSNGSVLVYHLTSGLLHKE, NDESPIEMIKVSHLKQYLAVVFKDKPLELWDIRTCTLLRE, GSMGSITCIAWKGDTLVLGDMDGNLNFWDLKARVSRGI, THRS…MVSS, NVTFRILDVDWCTSDKVILASDDGCIRVLEMSMKSTCFR, and ALSN…HSLS.

Component of the complex WDR11 composed of C17orf75, FAM91A1 and WDR11; FAM91A1 and WDR11 are required for proper location of the complex. Interacts with GLI3; the interaction associateS EMX1 with GLI3. Interacts with TBC1D23; this interaction may be indirect and recruits TBC1D23 to AP-1-derived vesicles. Interacts (via the N-terminal and the central portion of the protein) with EMX1. In terms of tissue distribution, broadly expressed in various organs including brain, eye,ear, lung, heart, kideny and gonads. Cerebral cortex. The entire developing central nervous system, except for the spinal cord, reveals expression. Expressed in the neuroepithelium, including the diencephalic region that gives rise to hypothalamic neurons. In the adult brain, intense expression is restricted to the olfactory bulb, the olfaction-related piriform cortex, the granule cell layer of the cerebellum, and neurons of the hippocampal formation. The brain demonstrated expression scattered throughout the hypothalamus, sometimes in clusters of neurons.

It localises to the cytoplasm. It is found in the cytoskeleton. Its subcellular location is the cilium basal body. The protein resides in the nucleus. The protein localises to the cilium axoneme. It localises to the cytoplasmic vesicle. It is found in the golgi apparatus. Its subcellular location is the trans-Golgi network. Involved in the Hedgehog (Hh) signaling pathway, is essential for normal ciliogenesis. Regulates the proteolytic processing of GLI3 and cooperates with the transcription factor EMX1 in the induction of downstream Hh pathway gene expression and gonadotropin-releasing hormone production. WDR11 complex facilitates the tethering of Adaptor protein-1 complex (AP-1)-derived vesicles. WDR11 complex acts together with TBC1D23 to facilitate the golgin-mediated capture of vesicles generated using AP-1. The sequence is that of WD repeat-containing protein 11 (Wdr11) from Mus musculus (Mouse).